We begin with the raw amino-acid sequence, 184 residues long: Guanylate kinase (184 aa).

In terms of domain architecture, Guanylate kinase-like spans Asn5 to Lys183. Gly12–Gly19 is a binding site for ATP.

The protein belongs to the guanylate kinase family.

The protein localises to the cytoplasm. It catalyses the reaction GMP + ATP = GDP + ADP. Its function is as follows. Essential for recycling GMP and indirectly, cGMP. This chain is Guanylate kinase, found in Prochlorococcus marinus (strain SARG / CCMP1375 / SS120).